Here is a 430-residue protein sequence, read N- to C-terminus: Adenylosuccinate synthetase (430 aa).

Residues 13-19 (GDEGKGK) and 41-43 (GHT) contribute to the GTP site. Residue D14 is the Proton acceptor of the active site. 2 residues coordinate Mg(2+): D14 and G41. IMP contacts are provided by residues 14 to 17 (DEGK), 39 to 42 (NAGH), T130, R144, Q225, T240, and R304. Residue H42 is the Proton donor of the active site. Substrate is bound at residue 300 to 306 (ATTGRAR). Residues R306, 332–334 (KLD), and 414–416 (STG) contribute to the GTP site.

It belongs to the adenylosuccinate synthetase family. In terms of assembly, homodimer. Mg(2+) serves as cofactor.

The protein localises to the cytoplasm. The catalysed reaction is IMP + L-aspartate + GTP = N(6)-(1,2-dicarboxyethyl)-AMP + GDP + phosphate + 2 H(+). It participates in purine metabolism; AMP biosynthesis via de novo pathway; AMP from IMP: step 1/2. Functionally, plays an important role in the de novo pathway of purine nucleotide biosynthesis. Catalyzes the first committed step in the biosynthesis of AMP from IMP. This chain is Adenylosuccinate synthetase, found in Pseudomonas syringae pv. syringae (strain B728a).